We begin with the raw amino-acid sequence, 473 residues long: Trigger factor (473 aa).

Positions 174–261 constitute a PPIase FKBP-type domain; sequence GDIAVVSFKG…LKDLKEKELP (88 aa). The segment at 442–473 is disordered; the sequence is ATKLTTKTTTKATTKKGVKTKSKPKVNKKEKN. A compositionally biased stretch (low complexity) spans 444 to 453; it reads KLTTKTTTKA. Residues 454 to 467 show a composition bias toward basic residues; sequence TTKKGVKTKSKPKV.

The protein belongs to the FKBP-type PPIase family. Tig subfamily.

It localises to the cytoplasm. The enzyme catalyses [protein]-peptidylproline (omega=180) = [protein]-peptidylproline (omega=0). Functionally, involved in protein export. Acts as a chaperone by maintaining the newly synthesized protein in an open conformation. Functions as a peptidyl-prolyl cis-trans isomerase. The chain is Trigger factor from Prochlorococcus marinus subsp. pastoris (strain CCMP1986 / NIES-2087 / MED4).